Here is a 304-residue protein sequence, read N- to C-terminus: Glutaminase (304 aa).

The substrate site is built by Ser-63, Asn-114, Glu-158, Asn-165, Tyr-189, Tyr-240, and Val-258.

Belongs to the glutaminase family. In terms of assembly, homotetramer.

The enzyme catalyses L-glutamine + H2O = L-glutamate + NH4(+). This chain is Glutaminase, found in Shewanella baltica (strain OS223).